The following is a 160-amino-acid chain: Endoribonuclease YbeY (160 aa).

Positions 112, 116, and 122 each coordinate Zn(2+). Positions glutamate 141–lysine 160 are disordered.

This sequence belongs to the endoribonuclease YbeY family. Requires Zn(2+) as cofactor.

Its subcellular location is the cytoplasm. Single strand-specific metallo-endoribonuclease involved in late-stage 70S ribosome quality control and in maturation of the 3' terminus of the 16S rRNA. The sequence is that of Endoribonuclease YbeY from Pseudomonas aeruginosa (strain UCBPP-PA14).